A 182-amino-acid polypeptide reads, in one-letter code: Ribosome maturation factor RimM (182 aa).

One can recognise a PRC barrel domain in the interval 101-182 (VDEYYWSDLK…RIYVNWGVDY (82 aa)).

This sequence belongs to the RimM family. In terms of assembly, binds ribosomal protein uS19.

It localises to the cytoplasm. In terms of biological role, an accessory protein needed during the final step in the assembly of 30S ribosomal subunit, possibly for assembly of the head region. Essential for efficient processing of 16S rRNA. May be needed both before and after RbfA during the maturation of 16S rRNA. It has affinity for free ribosomal 30S subunits but not for 70S ribosomes. This is Ribosome maturation factor RimM from Acinetobacter baylyi (strain ATCC 33305 / BD413 / ADP1).